The following is a 638-amino-acid chain: MLLAQINRDSQGMTEFPGGGMEAQHVTLCLTEAVTVADGDNLENMEGVSLQAVTLADGSTAYIQHNSKDAKLIDGQVIQLEDGSAAYVQHVPIPKSTGDSLRLEDGQAVQLEDGTTAFIHHTSKDSYDQSALQAVQLEDGTTAYIHHAVQVPQSDTILAIQADGTVAGLHTGDATIDPDTISALEQYAAKVSIDGSESVAGTGMIGENEQEKKMQIVLQGHATRVTAKSQQSGEKAFRCEYDGCGKLYTTAHHLKVHERSHTGDRPYQCEHAGCGKAFATGYGLKSHVRTHTGEKPYRCSEDNCTKSFKTSGDLQKHIRTHTGERPFKCPFEGCGRSFTTSNIRKVHVRTHTGERPYYCTEPGCGRAFASATNYKNHVRIHTGEKPYVCTVPGCDKRFTEYSSLYKHHVVHTHSKPYNCNHCGKTYKQISTLAMHKRTAHNDTEPIEEEQEAFFEPPPGQGEDVLKGSQITYVTGVEGDDVVSTQVATVTQSGLSQQVTLISQDGTQHVNISQADMQAIGNTITMVTQDGTPITVPAHDAVISSAGTHSVAMVTAEGTEGEQVAIVAQDLAAFHTASSEMGHQQHSHHLVTTETRPLTLVATSNGTQIAVQLGEQPSLEEAIRIASRIQQGETPGLDD.

M1 carries the post-translational modification N-acetylmethionine. K213 is covalently cross-linked (Glycyl lysine isopeptide (Lys-Gly) (interchain with G-Cter in SUMO2)). 4 consecutive C2H2-type zinc fingers follow at residues 237 to 261 (FRCE…ERSH), 267 to 291 (YQCE…VRTH), 297 to 321 (YRCS…IRTH), and 327 to 351 (FKCP…VRTH). T352 carries the post-translational modification Phosphothreonine. 3 C2H2-type zinc fingers span residues 357–381 (YYCT…VRIH), 387–411 (YVCT…HVVH), and 417–440 (YNCN…RTAH). A Glycyl lysine isopeptide (Lys-Gly) (interchain with G-Cter in SUMO2) cross-link involves residue K406.

The protein belongs to the GLI C2H2-type zinc-finger protein family. As to quaternary structure, interacts with CHD8. Forms a complex with HCFC1 and ZNF143. As to expression, expressed in all tissues tested, with the strongest expression in ovary.

It is found in the nucleus. Transcriptional activator. Activates the gene for selenocysteine tRNA (tRNAsec). Binds to the SPH motif of small nuclear RNA (snRNA) gene promoters. Participates in efficient U6 RNA polymerase III transcription via its interaction with CHD8. In complex with HCFC1 and ZNF143, regulates the expression of several genes, including AP2S1, ESCO2, OPHN1, RBL1, UBXN8 and ZNF32. The chain is Zinc finger protein 143 (ZNF143) from Homo sapiens (Human).